Reading from the N-terminus, the 1313-residue chain is Kinesin-like protein KIN-12B (1313 aa).

The disordered stretch occupies residues 1 to 74 (MKHFMMPRNA…PPRPPSSNPL (74 aa)). The span at 17–26 (ESQSPNPSLT) shows a compositional bias: polar residues. The region spanning 96 to 431 (GVKVIVRMKP…LRFAQRAKAI (336 aa)) is the Kinesin motor domain. Residue 170–177 (GQTGSGKT) participates in ATP binding. Microtubules-binding stretches follow at residues 298–302 (SSRSH), 331–337 (VDLAGSE), and 380–384 (HIPYR). Positions 429 to 467 (KAIQNKAIVNEVMQDDVNFLREVIRQLRDELQRVKDDKG) are neck. Residues 685-709 (ESASPKIRNSRKSLRTTSMSTASQK) are disordered. The span at 699-708 (RTTSMSTASQ) shows a compositional bias: polar residues. Coiled coils occupy residues 932 to 1003 (LDEE…YTDS), 1062 to 1130 (AEEL…RIRE), and 1167 to 1241 (EKEV…TEIS).

This sequence belongs to the TRAFAC class myosin-kinesin ATPase superfamily. Kinesin family. KIN-12 subfamily. Homodimer and heterodimer with KIN12A. Interacts with TIO.

It localises to the cytoplasm. The protein resides in the cytoskeleton. Its subcellular location is the phragmoplast. In terms of biological role, plus-end directed kinesin-like motor enzyme that plays a critical role in the organization of phragmoplast microtubules during cytokinesis. Constitutes a signaling module in association with serine/threonine-protein kinase TIO that is required to support phragmoplast expansion and cell-plate growth in plant cells. The polypeptide is Kinesin-like protein KIN-12B (Arabidopsis thaliana (Mouse-ear cress)).